The chain runs to 200 residues: uncharacterized protein (200 aa).

An N-terminal signal peptide occupies residues 1–24 (MSRVFSCVLRACVCAGLCCWVCMG). A disordered region spans residues 124 to 200 (GGRDLPMHGA…GEGGDNGEGE (77 aa)). A compositionally biased stretch (acidic residues) spans 184–200 (LGDEGETGEGGDNGEGE).

This is an uncharacterized protein from Homo sapiens (Human).